The chain runs to 329 residues: UPF0421 protein SH1063 (329 aa).

5 helical membrane passes run 25 to 45 (LFCLMLDLTPIFAILTAIVTI), 60 to 80 (LPATVIGALFAVLFTFIFGDP), 87 to 107 (FSALFTILVCTKLNLQVGTTV), 108 to 128 (AVLTSVAMIPGIHDAYLFNFF), and 131 to 151 (LLTALIGLVTAGLVNFIVLPP).

The protein belongs to the UPF0421 family.

It is found in the cell membrane. The protein is UPF0421 protein SH1063 of Staphylococcus haemolyticus (strain JCSC1435).